The following is a 483-amino-acid chain: Glutamyl-tRNA(Gln) amidotransferase subunit A (483 aa).

Residues K77 and S152 each act as charge relay system in the active site. S176 acts as the Acyl-ester intermediate in catalysis.

This sequence belongs to the amidase family. GatA subfamily. Heterotrimer of A, B and C subunits.

The catalysed reaction is L-glutamyl-tRNA(Gln) + L-glutamine + ATP + H2O = L-glutaminyl-tRNA(Gln) + L-glutamate + ADP + phosphate + H(+). In terms of biological role, allows the formation of correctly charged Gln-tRNA(Gln) through the transamidation of misacylated Glu-tRNA(Gln) in organisms which lack glutaminyl-tRNA synthetase. The reaction takes place in the presence of glutamine and ATP through an activated gamma-phospho-Glu-tRNA(Gln). The polypeptide is Glutamyl-tRNA(Gln) amidotransferase subunit A (Listeria monocytogenes serotype 4a (strain HCC23)).